The sequence spans 199 residues: Ubiquitin-conjugating enzyme E2-22 kDa (199 aa).

The UBC core domain maps to 4-154 (MAVSRIKREF…AKHWTNAYAG (151 aa)). Cys-92 acts as the Glycyl thioester intermediate in catalysis. Positions 161-199 (DCDSKIQRLRDMGIDEHEARAVLSKENWNLEKATEGLFS) constitute a UBA domain.

This sequence belongs to the ubiquitin-conjugating enzyme family. In terms of assembly, interacts with Rpn10. As to expression, during gastrulation, expression is highest in the invaginating posterior midgut primordium (PMG), high expression is also observed in the cephalic furrow and ventral ectodermal neurogenic region. In stage 10-11 embryos, expression is high in the pole cells present in the pocket formed by the PMG. During germ band retraction, expression appears to reinitiate in many tissues, especially the gut and nervous system. After dorsal closure, expression is detectable at low levels throughout the embryo.

The catalysed reaction is S-ubiquitinyl-[E1 ubiquitin-activating enzyme]-L-cysteine + [E2 ubiquitin-conjugating enzyme]-L-cysteine = [E1 ubiquitin-activating enzyme]-L-cysteine + S-ubiquitinyl-[E2 ubiquitin-conjugating enzyme]-L-cysteine.. The protein operates within protein modification; protein ubiquitination. Its function is as follows. Catalyzes the covalent attachment of ubiquitin to other proteins. This chain is Ubiquitin-conjugating enzyme E2-22 kDa, found in Drosophila melanogaster (Fruit fly).